The chain runs to 154 residues: Probable prefoldin subunit 5 (154 aa).

This sequence belongs to the prefoldin subunit alpha family. In terms of assembly, heterohexamer of two PFD-alpha type and four PFD-beta type subunits. Interacts with byr1.

Its subcellular location is the cytoplasm. In terms of biological role, binds specifically to cytosolic chaperonin (c-CPN) and transfers target proteins to it. Binds to nascent polypeptide chain and promotes folding in an environment in which there are many competing pathways for nonnative proteins. Required for normal cytoskeletal function and when bound to byr1, is involved in the regulation of sexual differentiation. The polypeptide is Probable prefoldin subunit 5 (bob1) (Schizosaccharomyces pombe (strain 972 / ATCC 24843) (Fission yeast)).